The primary structure comprises 592 residues: uncharacterized protein (592 aa).

The signal sequence occupies residues 1–23 (MRKAPLLRFTLASLALACSQAFA). Serine 37 functions as the Nucleophile in the catalytic mechanism. Active-site residues include aspartate 294 and histidine 297. The Autotransporter domain occupies 334-592 (HQDELRNQWQ…PDPGEPGGKP (259 aa)). The segment at 572–592 (FTLTGYTPHTAPDPGEPGGKP) is disordered.

This sequence belongs to the 'GDSL' lipolytic enzyme family.

This is an uncharacterized protein from Pseudomonas putida (Arthrobacter siderocapsulatus).